The following is a 157-amino-acid chain: Phosphopantetheine adenylyltransferase (157 aa).

Position 8 (serine 8) interacts with substrate. ATP is bound by residues 8–9 (SF) and histidine 16. Substrate is bound by residues lysine 40, threonine 72, and arginine 86. ATP-binding positions include 87 to 89 (GLR), glutamate 97, and 122 to 128 (FSFLSSS).

It belongs to the bacterial CoaD family. Homohexamer. Requires Mg(2+) as cofactor.

It is found in the cytoplasm. It carries out the reaction (R)-4'-phosphopantetheine + ATP + H(+) = 3'-dephospho-CoA + diphosphate. It participates in cofactor biosynthesis; coenzyme A biosynthesis; CoA from (R)-pantothenate: step 4/5. In terms of biological role, reversibly transfers an adenylyl group from ATP to 4'-phosphopantetheine, yielding dephospho-CoA (dPCoA) and pyrophosphate. The protein is Phosphopantetheine adenylyltransferase of Prochlorococcus marinus (strain MIT 9211).